The primary structure comprises 406 residues: Coenzyme A biosynthesis bifunctional protein CoaBC (406 aa).

The phosphopantothenoylcysteine decarboxylase stretch occupies residues 1–191; it reads MLNNRNVLLC…ETSAPLEGKH (191 aa). C157 serves as the catalytic Proton donor. The tract at residues 192–406 is phosphopantothenate--cysteine ligase; it reads VVITAGPTRE…ALSKQTGERS (215 aa). Positions 281, 291, 325, 339, and 343 each coordinate CTP.

It in the N-terminal section; belongs to the HFCD (homo-oligomeric flavin containing Cys decarboxylase) superfamily. In the C-terminal section; belongs to the PPC synthetase family. It depends on Mg(2+) as a cofactor. Requires FMN as cofactor.

It catalyses the reaction N-[(R)-4-phosphopantothenoyl]-L-cysteine + H(+) = (R)-4'-phosphopantetheine + CO2. It carries out the reaction (R)-4'-phosphopantothenate + L-cysteine + CTP = N-[(R)-4-phosphopantothenoyl]-L-cysteine + CMP + diphosphate + H(+). It functions in the pathway cofactor biosynthesis; coenzyme A biosynthesis; CoA from (R)-pantothenate: step 2/5. The protein operates within cofactor biosynthesis; coenzyme A biosynthesis; CoA from (R)-pantothenate: step 3/5. Catalyzes two sequential steps in the biosynthesis of coenzyme A. In the first step cysteine is conjugated to 4'-phosphopantothenate to form 4-phosphopantothenoylcysteine. In the second step the latter compound is decarboxylated to form 4'-phosphopantotheine. The protein is Coenzyme A biosynthesis bifunctional protein CoaBC of Bacillus subtilis (strain 168).